A 53-amino-acid polypeptide reads, in one-letter code: uncharacterized protein (53 aa).

The helical transmembrane segment at 20–42 (ILFPVLLVFDTILIVVGIALILF) threads the bilayer.

Its subcellular location is the membrane. This is an uncharacterized protein from Archaeoglobus fulgidus (strain ATCC 49558 / DSM 4304 / JCM 9628 / NBRC 100126 / VC-16).